Consider the following 747-residue polypeptide: Polyribonucleotide nucleotidyltransferase (747 aa).

Residues aspartate 487 and aspartate 493 each coordinate Mg(2+). The KH domain maps to 554-613 (PSTTTIKIDKDKIRDIIGPGGKVIKEICETSGAKIDISDDGSVSVYASDRDKLKVALDKI). One can recognise an S1 motif domain in the interval 623–691 (GEIFNGTVMK…NKGKAKLTIK (69 aa)). A disordered region spans residues 691–747 (KNADKDKSSNNPKPKNNVNNAKENSEPERRDSSKKRAWNEDSNNDKEEAITERKYFN). Low complexity predominate over residues 699–712 (SNNPKPKNNVNNAK). A compositionally biased stretch (basic and acidic residues) spans 727–747 (AWNEDSNNDKEEAITERKYFN).

Belongs to the polyribonucleotide nucleotidyltransferase family. Requires Mg(2+) as cofactor.

The protein localises to the cytoplasm. It carries out the reaction RNA(n+1) + phosphate = RNA(n) + a ribonucleoside 5'-diphosphate. Functionally, involved in mRNA degradation. Catalyzes the phosphorolysis of single-stranded polyribonucleotides processively in the 3'- to 5'-direction. The chain is Polyribonucleotide nucleotidyltransferase from Rickettsia felis (strain ATCC VR-1525 / URRWXCal2) (Rickettsia azadi).